The chain runs to 181 residues: ATP-dependent protease subunit HslV (181 aa).

Residue Thr-11 is part of the active site. Positions 166, 169, and 172 each coordinate Na(+).

Belongs to the peptidase T1B family. HslV subfamily. A double ring-shaped homohexamer of HslV is capped on each side by a ring-shaped HslU homohexamer. The assembly of the HslU/HslV complex is dependent on binding of ATP.

The protein localises to the cytoplasm. It carries out the reaction ATP-dependent cleavage of peptide bonds with broad specificity.. With respect to regulation, allosterically activated by HslU binding. Its function is as follows. Protease subunit of a proteasome-like degradation complex believed to be a general protein degrading machinery. In Chlorobaculum tepidum (strain ATCC 49652 / DSM 12025 / NBRC 103806 / TLS) (Chlorobium tepidum), this protein is ATP-dependent protease subunit HslV.